Consider the following 90-residue polypeptide: Small ribosomal subunit protein bS18 (90 aa).

It belongs to the bacterial ribosomal protein bS18 family. In terms of assembly, part of the 30S ribosomal subunit. Forms a tight heterodimer with protein bS6.

Binds as a heterodimer with protein bS6 to the central domain of the 16S rRNA, where it helps stabilize the platform of the 30S subunit. This Bordetella avium (strain 197N) protein is Small ribosomal subunit protein bS18.